The chain runs to 212 residues: MKSNKKILFIGAPGSGKGTISKILVEKYKLVHISTGDLFRKKISEDSQFAAQIQNYLSSGSYVPDEITNKLVADFIKKIPKNQGYILDGYPRTLQQLEFMIKNGINLDCVFYLKIKNETIISRLSQRLFCQKCQKSYNLLLAKPKNELKCDLDSTDLITRNDDRPEIITHRIEKFNNSVIPIVEFFKKSGIIYYLDAEQTLEETVIEIEKWL.

14–19 contacts ATP; sequence GSGKGT. The tract at residues 34-63 is NMP; that stretch reads STGDLFRKKISEDSQFAAQIQNYLSSGSYV. AMP contacts are provided by residues threonine 35, arginine 40, 61 to 63, 89 to 92, and glutamine 96; these read SYV and GYPR. Residues 126 to 163 form an LID region; that stretch reads QRLFCQKCQKSYNLLLAKPKNELKCDLDSTDLITRNDD. Arginine 127 serves as a coordination point for ATP. Positions 130 and 133 each coordinate Zn(2+). 136-137 contributes to the ATP binding site; sequence SY. Cysteine 150 and aspartate 153 together coordinate Zn(2+). Residues arginine 160 and arginine 171 each coordinate AMP. An ATP-binding site is contributed by glutamine 199.

The protein belongs to the adenylate kinase family. Monomer.

It is found in the cytoplasm. It carries out the reaction AMP + ATP = 2 ADP. The protein operates within purine metabolism; AMP biosynthesis via salvage pathway; AMP from ADP: step 1/1. In terms of biological role, catalyzes the reversible transfer of the terminal phosphate group between ATP and AMP. Plays an important role in cellular energy homeostasis and in adenine nucleotide metabolism. The sequence is that of Adenylate kinase from Mesomycoplasma hyopneumoniae (strain J / ATCC 25934 / NCTC 10110) (Mycoplasma hyopneumoniae).